The following is a 328-amino-acid chain: PLASTID TRANSCRIPTIONALLY ACTIVE protein 6, chloroplastic (328 aa).

Over residues 1–14 (MASSAASPSLSLLS) the composition is skewed to low complexity. The segment at 1–21 (MASSAASPSLSLLSFTSKPPY) is disordered. Residues 1–59 (MASSAASPSLSLLSFTSKPPYPSGSQRLFASFRTDGLFAPLTLKSRRGRGIVVKVDDVD) constitute a chloroplast transit peptide. The short motif at 267-275 (RKRDRKDDL) is the Nuclear localization signal element. The RNA binding domain signature appears at 301–319 (EREEWTKTREDMEKHLRKL).

As to quaternary structure, subunit of the plastid-encoded RNA polymerase (PEP) complex. Component of a large nuclear subcomplex that may include other PEP subunits (e.g. PTAC12/HMR/PAP5, PTAC14/PAP7 and PTAC7/PAP12). Binds directly to PTAC12/HMR/PAP5 in the nucleus. Interacts with MTERF5. Mostly expressed in rosette leaves, stems and flowers, and, to a lower extent, in roots and cauline leaves.

Its subcellular location is the plastid. The protein localises to the chloroplast. It localises to the chloroplast thylakoid. The protein resides in the nucleus. It is found in the nucleoplasm. In terms of biological role, essential protein involved in plastid gene expression and in chloroplast biogenesis. Links photomorphogenesis and chloroplast biogenesis through its dual localization; required for the formation of late photobodies in the nucleus, as well as for phytochrome B-mediated signaling cascade and subsequent reshaping of the plastid-encoded RNA polymerase (PEP) activity. Binds RNA via specific recognition motifs of viral origin. Recruited by MTERF5 to the transcriptionally paused region of psbEFLJ. Promotes leaf greening. This chain is PLASTID TRANSCRIPTIONALLY ACTIVE protein 6, chloroplastic, found in Arabidopsis thaliana (Mouse-ear cress).